The sequence spans 165 residues: Cytochrome b6-f complex subunit 4 (165 aa).

3 helical membrane passes run 36-56 (LLYI…GLAV), 95-115 (LLGV…PFLE), and 131-151 (TVFL…TLPI).

This sequence belongs to the cytochrome b family. PetD subfamily. The 4 large subunits of the cytochrome b6-f complex are cytochrome b6, subunit IV (17 kDa polypeptide, petD), cytochrome f and the Rieske protein, while the 4 small subunits are petG, petL, petM and petN. The complex functions as a dimer.

Its subcellular location is the plastid. It localises to the chloroplast thylakoid membrane. Its function is as follows. Component of the cytochrome b6-f complex, which mediates electron transfer between photosystem II (PSII) and photosystem I (PSI), cyclic electron flow around PSI, and state transitions. The polypeptide is Cytochrome b6-f complex subunit 4 (Populus alba (White poplar)).